The following is an 88-amino-acid chain: Elongation factor 1-beta (88 aa).

It belongs to the EF-1-beta/EF-1-delta family.

Promotes the exchange of GDP for GTP in EF-1-alpha/GDP, thus allowing the regeneration of EF-1-alpha/GTP that could then be used to form the ternary complex EF-1-alpha/GTP/AAtRNA. The chain is Elongation factor 1-beta from Halobacterium salinarum (strain ATCC 29341 / DSM 671 / R1).